The sequence spans 114 residues: uncharacterized protein (114 aa).

2 consecutive transmembrane segments (helical) span residues 9–29 (LAIFLFFVAVGFIIFIGSFWL) and 75–95 (LVHFFIPVGFGLLFGIAVAII).

It is found in the cell membrane. This is an uncharacterized protein from Mycoplasma pneumoniae (strain ATCC 29342 / M129 / Subtype 1) (Mycoplasmoides pneumoniae).